A 275-amino-acid polypeptide reads, in one-letter code: 2,3,4,5-tetrahydropyridine-2,6-dicarboxylate N-succinyltransferase (275 aa).

2 residues coordinate substrate: Arg104 and Asp141.

Belongs to the transferase hexapeptide repeat family. Homotrimer.

The protein resides in the cytoplasm. The catalysed reaction is (S)-2,3,4,5-tetrahydrodipicolinate + succinyl-CoA + H2O = (S)-2-succinylamino-6-oxoheptanedioate + CoA. The protein operates within amino-acid biosynthesis; L-lysine biosynthesis via DAP pathway; LL-2,6-diaminopimelate from (S)-tetrahydrodipicolinate (succinylase route): step 1/3. This is 2,3,4,5-tetrahydropyridine-2,6-dicarboxylate N-succinyltransferase from Mannheimia succiniciproducens (strain KCTC 0769BP / MBEL55E).